Here is a 357-residue protein sequence, read N- to C-terminus: UDP-N-acetylglucosamine--N-acetylmuramyl-(pentapeptide) pyrophosphoryl-undecaprenol N-acetylglucosamine transferase (357 aa).

UDP-N-acetyl-alpha-D-glucosamine is bound by residues 11–13 (TGG), Asn123, Arg159, Ser187, Ile241, 260–265 (ALTVAE), and Gln286.

Belongs to the glycosyltransferase 28 family. MurG subfamily.

Its subcellular location is the cell inner membrane. It carries out the reaction di-trans,octa-cis-undecaprenyl diphospho-N-acetyl-alpha-D-muramoyl-L-alanyl-D-glutamyl-meso-2,6-diaminopimeloyl-D-alanyl-D-alanine + UDP-N-acetyl-alpha-D-glucosamine = di-trans,octa-cis-undecaprenyl diphospho-[N-acetyl-alpha-D-glucosaminyl-(1-&gt;4)]-N-acetyl-alpha-D-muramoyl-L-alanyl-D-glutamyl-meso-2,6-diaminopimeloyl-D-alanyl-D-alanine + UDP + H(+). Its pathway is cell wall biogenesis; peptidoglycan biosynthesis. Cell wall formation. Catalyzes the transfer of a GlcNAc subunit on undecaprenyl-pyrophosphoryl-MurNAc-pentapeptide (lipid intermediate I) to form undecaprenyl-pyrophosphoryl-MurNAc-(pentapeptide)GlcNAc (lipid intermediate II). The sequence is that of UDP-N-acetylglucosamine--N-acetylmuramyl-(pentapeptide) pyrophosphoryl-undecaprenol N-acetylglucosamine transferase from Aromatoleum aromaticum (strain DSM 19018 / LMG 30748 / EbN1) (Azoarcus sp. (strain EbN1)).